The following is a 268-amino-acid chain: Tryptophan synthase alpha chain (268 aa).

Residues glutamate 49 and aspartate 60 each act as proton acceptor in the active site.

The protein belongs to the TrpA family. Tetramer of two alpha and two beta chains.

It catalyses the reaction (1S,2R)-1-C-(indol-3-yl)glycerol 3-phosphate + L-serine = D-glyceraldehyde 3-phosphate + L-tryptophan + H2O. It participates in amino-acid biosynthesis; L-tryptophan biosynthesis; L-tryptophan from chorismate: step 5/5. Functionally, the alpha subunit is responsible for the aldol cleavage of indoleglycerol phosphate to indole and glyceraldehyde 3-phosphate. This Dechloromonas aromatica (strain RCB) protein is Tryptophan synthase alpha chain.